We begin with the raw amino-acid sequence, 126 residues long: RutC family protein y4sK (126 aa).

It belongs to the RutC family.

The polypeptide is RutC family protein y4sK (Sinorhizobium fredii (strain NBRC 101917 / NGR234)).